We begin with the raw amino-acid sequence, 479 residues long: Hydrogenase-4 component D (479 aa).

The next 15 helical transmembrane spans lie at 3 to 23 (NLAL…SFSP), 30 to 50 (WGVL…SAFY), 55 to 75 (VAVT…LVID), 80 to 100 (LILF…TGYL), 117 to 137 (AFLL…TLLG), 168 to 188 (ALLI…TLFL), 208 to 228 (LVYG…PMQA), 238 to 258 (TPIS…YIFA), 270 to 290 (VIGG…FLMY), 300 to 320 (LAWS…LSIF), 330 to 350 (IAYI…AGAL), 369 to 389 (LPLP…VPPF), 390 to 410 (NGFF…VEYW), 411 to 431 (ILLP…AWFI), and 458 to 478 (LVLI…ATWL).

The protein belongs to the complex I subunit 5 family.

The protein resides in the cell inner membrane. Functionally, possible component of hydrogenase 4. In Escherichia coli (strain K12), this protein is Hydrogenase-4 component D.